The following is a 242-amino-acid chain: Segregation and condensation protein A (242 aa).

This sequence belongs to the ScpA family. In terms of assembly, component of a cohesin-like complex composed of ScpA, ScpB and the Smc homodimer, in which ScpA and ScpB bind to the head domain of Smc. The presence of the three proteins is required for the association of the complex with DNA.

It localises to the cytoplasm. Functionally, participates in chromosomal partition during cell division. May act via the formation of a condensin-like complex containing Smc and ScpB that pull DNA away from mid-cell into both cell halves. This chain is Segregation and condensation protein A, found in Streptococcus pneumoniae (strain Taiwan19F-14).